We begin with the raw amino-acid sequence, 829 residues long: Cadherin-3 (829 aa).

The first 24 residues, 1–24, serve as a signal peptide directing secretion; sequence MGLPRGPLASLLLLQVCWLQCAAS. Residues 25–107 constitute a propeptide that is removed on maturation; sequence EPCRAVFREA…SKRILRRHKR (83 aa). 5 Cadherin domains span residues 108–215, 216–328, 329–440, 441–546, and 547–650; these read DWVV…KPKF, TQDT…APMF, DPQK…APVF, VPPS…DHGP, and VPEP…CPGP. Topologically, residues 108–654 are extracellular; the sequence is DWVVAPISVP…ETCPGPWKGG (547 aa). A glycan (N-linked (GlcNAc...) asparagine) is linked at Asn200. An N-linked (GlcNAc...) asparagine glycan is attached at Asn566. A helical membrane pass occupies residues 655–677; it reads FILPVLGAVLALLFLLLVLLLLV. Topologically, residues 678-829 are cytoplasmic; it reads RKKRKIKEPL…ADMYGGGEDD (152 aa).

Interacts with CDCP1 and CTNNB1. In terms of tissue distribution, expressed in some normal epithelial tissues and in some carcinoma cell lines.

The protein localises to the cell membrane. Its function is as follows. Cadherins are calcium-dependent cell adhesion proteins. They preferentially interact with themselves in a homophilic manner in connecting cells; cadherins may thus contribute to the sorting of heterogeneous cell types. The polypeptide is Cadherin-3 (CDH3) (Homo sapiens (Human)).